The chain runs to 645 residues: 1,4-alpha-glucan branching enzyme GlgB (645 aa).

Aspartate 309 functions as the Nucleophile in the catalytic mechanism. Glutamate 352 (proton donor) is an active-site residue. Residues methionine 621–arginine 645 form a disordered region. Over residues lysine 626–leucine 635 the composition is skewed to basic and acidic residues.

This sequence belongs to the glycosyl hydrolase 13 family. GlgB subfamily. In terms of assembly, monomer.

It carries out the reaction Transfers a segment of a (1-&gt;4)-alpha-D-glucan chain to a primary hydroxy group in a similar glucan chain.. It functions in the pathway glycan biosynthesis; glycogen biosynthesis. Functionally, catalyzes the formation of the alpha-1,6-glucosidic linkages in glycogen by scission of a 1,4-alpha-linked oligosaccharide from growing alpha-1,4-glucan chains and the subsequent attachment of the oligosaccharide to the alpha-1,6 position. In Bacillus cytotoxicus (strain DSM 22905 / CIP 110041 / 391-98 / NVH 391-98), this protein is 1,4-alpha-glucan branching enzyme GlgB.